The following is a 356-amino-acid chain: Protein RecA (356 aa).

77 to 84 (GPESSGKT) contributes to the ATP binding site.

Belongs to the RecA family.

The protein localises to the cytoplasm. Its function is as follows. Can catalyze the hydrolysis of ATP in the presence of single-stranded DNA, the ATP-dependent uptake of single-stranded DNA by duplex DNA, and the ATP-dependent hybridization of homologous single-stranded DNAs. It interacts with LexA causing its activation and leading to its autocatalytic cleavage. The protein is Protein RecA of Caulobacter vibrioides (strain ATCC 19089 / CIP 103742 / CB 15) (Caulobacter crescentus).